A 248-amino-acid chain; its full sequence is Probable phosphatase VF_A0065 (248 aa).

The Zn(2+) site is built by H8, H10, H16, H41, E74, H102, H132, D194, and H196.

Belongs to the PHP family. Zn(2+) serves as cofactor.

The protein is Probable phosphatase VF_A0065 of Aliivibrio fischeri (strain ATCC 700601 / ES114) (Vibrio fischeri).